The following is a 438-amino-acid chain: MTAPAAAIRRLDAREPEFLATLDALLAFEGGADARIDAAVSEILRAVRTTGDAAVLEYTRRFDHLDVKSMVQLELSKSELKAALDSLTVEQREALRVAADRVRVYHERQRAESWDYVEADGTRLGQKVTPLDRVGLYVPGGRASYPSSVLMNAIPAKVAGVGELIMVVPTPNGEKNPLVLAAAAITGVDRVFTIGGAQAVAALAYGTQTLPQVDKIVGPGNAYVAEAKRRVFGTVGIDMVAGPSEVLIISDGSGQAGWVAMDLFAQAEHDELAQSILLCTDAGFIDAVAASIERLLPSMPRRETIAASLANRGALIHVDSLEQACAIANRIAPEHLELSLDDAEPWIGRIRHAGAIFVGHWSVEALGDYCAGPNHVLPTMRSARFSSPLGVYDFQKRTSIVQISEAGAQTLGRVASILARGEGLQAHARSAEMRLHDR.

NAD(+)-binding residues include tyrosine 137, glutamine 198, and asparagine 221. The substrate site is built by serine 244, glutamine 266, and histidine 269. Glutamine 266 and histidine 269 together coordinate Zn(2+). Residues glutamate 334 and histidine 335 each act as proton acceptor in the active site. Residues histidine 335, aspartate 368, glutamate 422, and histidine 427 each contribute to the substrate site. Aspartate 368 lines the Zn(2+) pocket. Position 427 (histidine 427) interacts with Zn(2+).

It belongs to the histidinol dehydrogenase family. Requires Zn(2+) as cofactor.

The enzyme catalyses L-histidinol + 2 NAD(+) + H2O = L-histidine + 2 NADH + 3 H(+). It participates in amino-acid biosynthesis; L-histidine biosynthesis; L-histidine from 5-phospho-alpha-D-ribose 1-diphosphate: step 9/9. Catalyzes the sequential NAD-dependent oxidations of L-histidinol to L-histidinaldehyde and then to L-histidine. This Aromatoleum aromaticum (strain DSM 19018 / LMG 30748 / EbN1) (Azoarcus sp. (strain EbN1)) protein is Histidinol dehydrogenase.